Reading from the N-terminus, the 481-residue chain is Argininosuccinate lyase (481 aa).

The protein belongs to the lyase 1 family. Argininosuccinate lyase subfamily.

The protein localises to the cytoplasm. The catalysed reaction is 2-(N(omega)-L-arginino)succinate = fumarate + L-arginine. It functions in the pathway amino-acid biosynthesis; L-arginine biosynthesis; L-arginine from L-ornithine and carbamoyl phosphate: step 3/3. This chain is Argininosuccinate lyase, found in Kineococcus radiotolerans (strain ATCC BAA-149 / DSM 14245 / SRS30216).